The following is a 215-amino-acid chain: Adenylate kinase (215 aa).

10 to 15 (GAGKGT) provides a ligand contact to ATP. Positions 30 to 59 (STGDMLRAAVKAGTELGLKAKSVMDAGNLV) are NMP. AMP is bound by residues threonine 31, arginine 36, 57 to 59 (NLV), 85 to 88 (GFPR), and glutamine 92. The segment at 122 to 159 (GRRVHEGSGRIYHTIFNPPKVEGVDDVTGESLVQRKDD) is LID. ATP contacts are provided by residues arginine 123 and 132–133 (IY). Residues arginine 156 and arginine 167 each coordinate AMP. Glycine 201 serves as a coordination point for ATP.

The protein belongs to the adenylate kinase family. Monomer.

The protein localises to the cytoplasm. It carries out the reaction AMP + ATP = 2 ADP. The protein operates within purine metabolism; AMP biosynthesis via salvage pathway; AMP from ADP: step 1/1. Its function is as follows. Catalyzes the reversible transfer of the terminal phosphate group between ATP and AMP. Plays an important role in cellular energy homeostasis and in adenine nucleotide metabolism. The chain is Adenylate kinase from Pseudomonas syringae pv. tomato (strain ATCC BAA-871 / DC3000).